A 421-amino-acid chain; its full sequence is 2',3'-cyclic-nucleotide 3'-phosphodiesterase (421 aa).

Ser-6 and Ser-9 each carry phosphoserine. Tyr-110 is modified (phosphotyrosine). A Phosphoserine modification is found at Ser-170. The active-site Proton acceptor is His-251. Thr-253 contacts substrate. The active-site Proton donor is the His-330. Thr-332 contributes to the substrate binding site. Ser-359 is subject to Phosphoserine. Cys-418 carries the post-translational modification Cysteine methyl ester. Cys-418 is lipidated: S-farnesyl cysteine. Positions 419–421 (TII) are cleaved as a propeptide — removed in mature form.

This sequence belongs to the 2H phosphoesterase superfamily. CNPase family. As to quaternary structure, exists as monomers and homodimers.

Its subcellular location is the membrane. It localises to the melanosome. The enzyme catalyses a nucleoside 2',3'-cyclic phosphate + H2O = a nucleoside 2'-phosphate + H(+). Its function is as follows. Catalyzes the formation of 2'-nucleotide products from 2',3'-cyclic substrates. May participate in RNA metabolism in the myelinating cell, CNP is the third most abundant protein in central nervous system myelin. The polypeptide is 2',3'-cyclic-nucleotide 3'-phosphodiesterase (Homo sapiens (Human)).